We begin with the raw amino-acid sequence, 375 residues long: Probable G-protein coupled receptor 27 (375 aa).

At 1-23 (MANASEPGGSGGGEAAALGLKLA) the chain is on the extracellular side. Asn-3 carries N-linked (GlcNAc...) asparagine glycosylation. The chain crosses the membrane as a helical span at residues 24–44 (TLSLLLCVSLAGNVLFALLIV). At 45 to 55 (RERSLHRAPYY) the chain is on the cytoplasmic side. The helical transmembrane segment at 56–76 (LLLDLCLADGLRALACLPAVM) threads the bilayer. Residues 77-97 (LAARRAAAAAGAPPGALGCKL) lie on the Extracellular side of the membrane. The cysteines at positions 95 and 171 are disulfide-linked. Residues 98–118 (LAFLAALFCFHAAFLLLGVGV) form a helical membrane-spanning segment. Over 119–139 (TRYLAIAHHRFYAERLAGWPC) the chain is Cytoplasmic. A helical membrane pass occupies residues 140 to 160 (AAMLVCAAWALALAAAFPPVL). Residues 161 to 181 (DGGGDDEDAPCALEQRPDGAP) are Extracellular-facing. Residues 182–202 (GALGFLLLLAVVVGATHLVYL) form a helical membrane-spanning segment. Over 203 to 285 (RLLFFIHDRR…FKTEKRLCKM (83 aa)) the chain is Cytoplasmic. A helical membrane pass occupies residues 286–306 (FYAVTLLFLLLWGPYVVASYL). The Extracellular segment spans residues 307 to 320 (RVLVRPGAVPQAYL). Residues 321 to 341 (TASVWLTFAQAGINPVVCFLF) form a helical membrane-spanning segment. Residues 342 to 375 (NRELRDCFRAQFPCCQSPRTTQATHPCDLKGIGL) lie on the Cytoplasmic side of the membrane.

This sequence belongs to the G-protein coupled receptor 1 family. In terms of tissue distribution, highly expressed as a 3.0 kb transcript in brain, ovary, testis, heart, prostate and peripheral Leukocytes. Lower levels in pancreas and small intestine. A 2.3 kb transcript was also found in peripheral Leukocytes. In brain regions, detected as a 3.0 kb transcript in all regions tested. Highest levels in the caudate nucleus, putamen, hippocampus and subthalamic nucleus. Lowest level in the cerebellum.

Its subcellular location is the cell membrane. Orphan receptor. Possible candidate for amine-like G-protein coupled receptor. This is Probable G-protein coupled receptor 27 (GPR27) from Homo sapiens (Human).